The primary structure comprises 134 residues: Small ribosomal subunit protein uS9 (134 aa).

The interval 114-134 (QKEAKNFGGPGARSKYQKSYR) is disordered.

It belongs to the universal ribosomal protein uS9 family.

This Methanosarcina mazei (strain ATCC BAA-159 / DSM 3647 / Goe1 / Go1 / JCM 11833 / OCM 88) (Methanosarcina frisia) protein is Small ribosomal subunit protein uS9.